The primary structure comprises 557 residues: Anthrax toxin receptor-like (557 aa).

The signal sequence occupies residues 1–25 (MRSHGRWGPCFLLFLLLLPPPLFRA). Topologically, residues 26–345 (GSLRYHGPGW…KSNVSVTSST (320 aa)) are extracellular. Residues 74–244 (DLYFILDKSG…KAMRDTVDAL (171 aa)) enclose the VWFA domain. A divalent metal cation is bound by residues Ser82, Ser84, and Thr148. The chain crosses the membrane as a helical span at residues 346 to 366 (CGIFSNWLYFLLPLLLLPLLL). Residues 367–557 (CCLWRLCRKK…PTSKAPNTQD (191 aa)) are Cytoplasmic-facing. 2 disordered regions span residues 380–411 (EPPP…LPPP) and 497–557 (ESPS…NTQD). The segment covering 386-395 (KPEKEPEQEK) has biased composition (basic and acidic residues). A compositionally biased stretch (pro residues) spans 396 to 411 (PPPPPPPSPPPPLPPP). The span at 534 to 557 (GTLQNPLCPSLPRSPTSKAPNTQD) shows a compositional bias: polar residues.

Belongs to the ATR family.

It localises to the membrane. The chain is Anthrax toxin receptor-like (ANTXRL) from Macaca fascicularis (Crab-eating macaque).